A 265-amino-acid polypeptide reads, in one-letter code: Glutamate racemase (265 aa).

Substrate is bound by residues 7-8 (DS) and 39-40 (YG). Cys-71 functions as the Proton donor/acceptor in the catalytic mechanism. 72 to 73 (NT) provides a ligand contact to substrate. Catalysis depends on Cys-184, which acts as the Proton donor/acceptor. 185 to 186 (TH) is a binding site for substrate.

It belongs to the aspartate/glutamate racemases family.

It catalyses the reaction L-glutamate = D-glutamate. The protein operates within cell wall biogenesis; peptidoglycan biosynthesis. Its function is as follows. Provides the (R)-glutamate required for cell wall biosynthesis. This Sulfurovum sp. (strain NBC37-1) protein is Glutamate racemase.